Here is a 255-residue protein sequence, read N- to C-terminus: Tachylectin-2 (255 aa).

A signal peptide spans 1–19; sequence MKFLLVVLGFIGFLKDGIT. WD repeat units lie at residues 20-67, 68-114, 115-161, 162-208, and 209-255; these read VGGE…FLFL, SPGG…FLFF, DPNG…FLFF, HPNG…FLFF, and SSVG…FLFF.

In terms of assembly, monomer.

It localises to the secreted. The protein localises to the cytoplasmic granule. Lectin that binds specifically to N-acetylglucosamine and N-acetylgalactosamine. Is part of the innate immunity host defense system of the horseshoe crab. The chain is Tachylectin-2 from Tachypleus tridentatus (Japanese horseshoe crab).